A 196-amino-acid polypeptide reads, in one-letter code: Adenine phosphoribosyltransferase (196 aa).

This sequence belongs to the purine/pyrimidine phosphoribosyltransferase family. As to quaternary structure, homodimer.

Its subcellular location is the cytoplasm. It carries out the reaction AMP + diphosphate = 5-phospho-alpha-D-ribose 1-diphosphate + adenine. It functions in the pathway purine metabolism; AMP biosynthesis via salvage pathway; AMP from adenine: step 1/1. In terms of biological role, catalyzes a salvage reaction resulting in the formation of AMP, that is energically less costly than de novo synthesis. The chain is Adenine phosphoribosyltransferase from Methylibium petroleiphilum (strain ATCC BAA-1232 / LMG 22953 / PM1).